The chain runs to 365 residues: Histidinol-phosphate aminotransferase (365 aa).

Residue lysine 220 is modified to N6-(pyridoxal phosphate)lysine.

Belongs to the class-II pyridoxal-phosphate-dependent aminotransferase family. Histidinol-phosphate aminotransferase subfamily. As to quaternary structure, homodimer. Pyridoxal 5'-phosphate is required as a cofactor.

The catalysed reaction is L-histidinol phosphate + 2-oxoglutarate = 3-(imidazol-4-yl)-2-oxopropyl phosphate + L-glutamate. It participates in amino-acid biosynthesis; L-histidine biosynthesis; L-histidine from 5-phospho-alpha-D-ribose 1-diphosphate: step 7/9. The chain is Histidinol-phosphate aminotransferase from Xylella fastidiosa (strain 9a5c).